Reading from the N-terminus, the 576-residue chain is Protein O-linked-mannose beta-1,4-N-acetylglucosaminyltransferase 2 (576 aa).

The Cytoplasmic portion of the chain corresponds to Met-1–Ser-4. Residues Ala-5–Leu-25 traverse the membrane as a helical; Signal-anchor for type II membrane protein segment. Topologically, residues Leu-26–Thr-576 are lumenal. 6 N-linked (GlcNAc...) asparagine glycosylation sites follow: Asn-98, Asn-275, Asn-335, Asn-451, Asn-539, and Asn-561. In terms of domain architecture, Fibronectin type-III spans Arg-482–Thr-576.

Belongs to the glycosyltransferase 61 family.

The protein localises to the endoplasmic reticulum membrane. The catalysed reaction is 3-O-(alpha-D-mannosyl)-L-threonyl-[protein] + UDP-N-acetyl-alpha-D-glucosamine = 3-O-(N-acetyl-beta-D-glucosaminyl-(1-&gt;4)-alpha-D-mannosyl)-L-threonyl-[protein] + UDP + H(+). Its pathway is protein modification; protein glycosylation. In terms of biological role, O-linked mannose beta-1,4-N-acetylglucosaminyltransferase that transfers UDP-N-acetyl-D-glucosamine to the 4-position of the mannose to generate N-acetyl-D-glucosamine-beta-1,4-O-D-mannosylprotein. Involved in the biosynthesis of the phosphorylated O-mannosyl trisaccharide (N-acetylgalactosamine-beta-3-N-acetylglucosamine-beta-4-(phosphate-6-)mannose), a carbohydrate structure present in alpha-dystroglycan (DAG1), which is required for binding laminin G-like domain-containing extracellular proteins with high affinity. The chain is Protein O-linked-mannose beta-1,4-N-acetylglucosaminyltransferase 2 (pomgnt2) from Xenopus tropicalis (Western clawed frog).